The following is a 529-amino-acid chain: ATP synthase subunit alpha (529 aa).

Residue 173 to 180 (GDRQTGKT) coordinates ATP.

It belongs to the ATPase alpha/beta chains family. In terms of assembly, F-type ATPases have 2 components, CF(1) - the catalytic core - and CF(0) - the membrane proton channel. CF(1) has five subunits: alpha(3), beta(3), gamma(1), delta(1), epsilon(1). CF(0) has three main subunits: a(1), b(2) and c(9-12). The alpha and beta chains form an alternating ring which encloses part of the gamma chain. CF(1) is attached to CF(0) by a central stalk formed by the gamma and epsilon chains, while a peripheral stalk is formed by the delta and b chains.

It localises to the cell membrane. The catalysed reaction is ATP + H2O + 4 H(+)(in) = ADP + phosphate + 5 H(+)(out). In terms of biological role, produces ATP from ADP in the presence of a proton gradient across the membrane. The alpha chain is a regulatory subunit. The protein is ATP synthase subunit alpha of Streptomyces avermitilis (strain ATCC 31267 / DSM 46492 / JCM 5070 / NBRC 14893 / NCIMB 12804 / NRRL 8165 / MA-4680).